Consider the following 478-residue polypeptide: Glutamyl-tRNA reductase (478 aa).

Substrate-binding positions include 49-52 (TCNR), Ser-109, 114-116 (EQQ), and Gln-120. The active-site Nucleophile is the Cys-50. 191-196 (GAGSMG) serves as a coordination point for NADP(+).

The protein belongs to the glutamyl-tRNA reductase family. Homodimer.

The catalysed reaction is (S)-4-amino-5-oxopentanoate + tRNA(Glu) + NADP(+) = L-glutamyl-tRNA(Glu) + NADPH + H(+). It participates in porphyrin-containing compound metabolism; protoporphyrin-IX biosynthesis; 5-aminolevulinate from L-glutamyl-tRNA(Glu): step 1/2. In terms of biological role, catalyzes the NADPH-dependent reduction of glutamyl-tRNA(Glu) to glutamate 1-semialdehyde (GSA). This chain is Glutamyl-tRNA reductase, found in Rhodococcus opacus (strain B4).